We begin with the raw amino-acid sequence, 425 residues long: Oxytetracycline polyketide putative beta-ketoacyl synthase 1 (425 aa).

One can recognise a Ketosynthase family 3 (KS3) domain in the interval 7-420; it reads ARRVVITGIG…GFQSAIVLTE (414 aa). Residues C173, H313, and H350 each act as for beta-ketoacyl synthase activity in the active site.

It belongs to the thiolase-like superfamily. Beta-ketoacyl-ACP synthases family.

It participates in antibiotic biosynthesis; oxytetracycline biosynthesis. This Streptomyces rimosus protein is Oxytetracycline polyketide putative beta-ketoacyl synthase 1.